Consider the following 357-residue polypeptide: Transactivator protein DR7 (357 aa).

Residues 107 to 187 form an interaction with host p53 region; the sequence is LVGKDGAVYV…LLTVGGLCQT (81 aa).

The protein belongs to the herpesviridae US22 family. Interacts with host p53 and inhibits p53-activated transcription.

Functionally, involved in transactivation. Displays transforming activity. The chain is Transactivator protein DR7 (DR7L) from Homo sapiens (Human).